The following is a 179-amino-acid chain: NAD(P)H-quinone oxidoreductase subunit 6, chloroplastic (179 aa).

The next 5 helical transmembrane spans lie at 8–28 (ITLFVLDFFIFVGALGVVFFN), 30–50 (IIYSALFLGLTFLSVALLYLL), 58–78 (VAQVIIYVGAINVLIVFAIML), 98–118 (SFCVNFILFSTIVTMIVTTPW), and 150–170 (VLPFELLSLLLLIALIGAVII).

Belongs to the complex I subunit 6 family. As to quaternary structure, NDH is composed of at least 16 different subunits, 5 of which are encoded in the nucleus.

It is found in the plastid. The protein resides in the chloroplast thylakoid membrane. The catalysed reaction is a plastoquinone + NADH + (n+1) H(+)(in) = a plastoquinol + NAD(+) + n H(+)(out). It catalyses the reaction a plastoquinone + NADPH + (n+1) H(+)(in) = a plastoquinol + NADP(+) + n H(+)(out). NDH shuttles electrons from NAD(P)H:plastoquinone, via FMN and iron-sulfur (Fe-S) centers, to quinones in the photosynthetic chain and possibly in a chloroplast respiratory chain. The immediate electron acceptor for the enzyme in this species is believed to be plastoquinone. Couples the redox reaction to proton translocation, and thus conserves the redox energy in a proton gradient. This Chaetosphaeridium globosum (Charophycean green alga) protein is NAD(P)H-quinone oxidoreductase subunit 6, chloroplastic (ndhG).